A 140-amino-acid chain; its full sequence is Sex-regulated protein janus-B (140 aa).

Arginine 42 is a binding site for substrate. Histidine 69 functions as the Proton acceptor in the catalytic mechanism. 110–112 (CKT) is a substrate binding site.

Belongs to the janus family.

Its function is as follows. JanA and janB regulate somatic sex differentiation. In Drosophila pseudoobscura pseudoobscura (Fruit fly), this protein is Sex-regulated protein janus-B (janB).